The following is a 132-amino-acid chain: U10-hexatoxin-Hi1a (132 aa).

Positions 1–20 (MKGFIVFSLSLCLVFTVCLA) are cleaved as a signal peptide. The propeptide occupies 21–30 (EDELMKEAVR).

In terms of processing, contains 5 disulfide bonds. Expressed by the venom gland.

The protein resides in the secreted. Probable ion channel inhibitor. This chain is U10-hexatoxin-Hi1a, found in Hadronyche infensa (Fraser island funnel-web spider).